Consider the following 306-residue polypeptide: Acetyl-coenzyme A carboxylase carboxyl transferase subunit beta (306 aa).

One can recognise a CoA carboxyltransferase N-terminal domain in the interval 25 to 294; the sequence is LWIKDPTSGE…VFNPSDPSPT (270 aa). The interval 286 to 306 is disordered; sequence FNPSDPSPTDSQTSLSTTKAA. Residues 288–306 are compositionally biased toward low complexity; the sequence is PSDPSPTDSQTSLSTTKAA.

It belongs to the AccD/PCCB family. Acetyl-CoA carboxylase is a heterohexamer composed of biotin carboxyl carrier protein (AccB), biotin carboxylase (AccC) and two subunits each of ACCase subunit alpha (AccA) and ACCase subunit beta (AccD).

It is found in the cytoplasm. It carries out the reaction N(6)-carboxybiotinyl-L-lysyl-[protein] + acetyl-CoA = N(6)-biotinyl-L-lysyl-[protein] + malonyl-CoA. Its pathway is lipid metabolism; malonyl-CoA biosynthesis; malonyl-CoA from acetyl-CoA: step 1/1. Component of the acetyl coenzyme A carboxylase (ACC) complex. Biotin carboxylase (BC) catalyzes the carboxylation of biotin on its carrier protein (BCCP) and then the CO(2) group is transferred by the transcarboxylase to acetyl-CoA to form malonyl-CoA. This chain is Acetyl-coenzyme A carboxylase carboxyl transferase subunit beta, found in Bartonella grahamii (strain as4aup).